An 896-amino-acid polypeptide reads, in one-letter code: Protein translocase subunit SecA (896 aa).

Residues Q87, G105 to T109, and D507 contribute to the ATP site. Positions L855–P879 are disordered. Positions T866–R876 are enriched in basic and acidic residues. The Zn(2+) site is built by C880, C882, C891, and H892.

The protein belongs to the SecA family. Monomer and homodimer. Part of the essential Sec protein translocation apparatus which comprises SecA, SecYEG and auxiliary proteins SecDF-YajC and YidC. The cofactor is Zn(2+).

The protein localises to the cell inner membrane. Its subcellular location is the cytoplasm. It catalyses the reaction ATP + H2O + cellular proteinSide 1 = ADP + phosphate + cellular proteinSide 2.. In terms of biological role, part of the Sec protein translocase complex. Interacts with the SecYEG preprotein conducting channel. Has a central role in coupling the hydrolysis of ATP to the transfer of proteins into and across the cell membrane, serving both as a receptor for the preprotein-SecB complex and as an ATP-driven molecular motor driving the stepwise translocation of polypeptide chains across the membrane. The protein is Protein translocase subunit SecA of Legionella pneumophila (strain Lens).